Reading from the N-terminus, the 87-residue chain is Large ribosomal subunit protein bL31B (87 aa).

The protein belongs to the bacterial ribosomal protein bL31 family. Type B subfamily. In terms of assembly, part of the 50S ribosomal subunit.

The sequence is that of Large ribosomal subunit protein bL31B from Salinispora arenicola (strain CNS-205).